Reading from the N-terminus, the 360-residue chain is Josephin-like protein (360 aa).

The Josephin domain maps to 5 to 192 (ESKIYHERQR…NQLPLASNYR (188 aa)). Residue Cys-18 is the Nucleophile of the active site. The active-site Proton acceptor is His-129.

The enzyme catalyses Thiol-dependent hydrolysis of ester, thioester, amide, peptide and isopeptide bonds formed by the C-terminal Gly of ubiquitin (a 76-residue protein attached to proteins as an intracellular targeting signal).. May act as a deubiquitinating enzyme. This Arabidopsis thaliana (Mouse-ear cress) protein is Josephin-like protein.